A 438-amino-acid polypeptide reads, in one-letter code: 5-methylthioadenosine/S-adenosylhomocysteine deaminase (438 aa).

2 residues coordinate Zn(2+): H66 and H68. Residues E95, R148, and H188 each contribute to the substrate site. Zn(2+) is bound at residue H215. Substrate-binding residues include E218 and D305. D305 contacts Zn(2+).

Belongs to the metallo-dependent hydrolases superfamily. MTA/SAH deaminase family. Zn(2+) is required as a cofactor.

It catalyses the reaction S-adenosyl-L-homocysteine + H2O + H(+) = S-inosyl-L-homocysteine + NH4(+). The catalysed reaction is S-methyl-5'-thioadenosine + H2O + H(+) = S-methyl-5'-thioinosine + NH4(+). Functionally, catalyzes the deamination of 5-methylthioadenosine and S-adenosyl-L-homocysteine into 5-methylthioinosine and S-inosyl-L-homocysteine, respectively. Is also able to deaminate adenosine. The polypeptide is 5-methylthioadenosine/S-adenosylhomocysteine deaminase (Halalkalibacterium halodurans (strain ATCC BAA-125 / DSM 18197 / FERM 7344 / JCM 9153 / C-125) (Bacillus halodurans)).